Reading from the N-terminus, the 293-residue chain is Protein YIF1A (293 aa).

The interval 1 to 27 is disordered; it reads MAYHSAYGVHGSKHRTRAAPDPPPLFD. Ala-2 bears the N-acetylalanine mark. At 2 to 138 the chain is on the cytoplasmic side; it reads AYHSAYGVHG…PPRKDLNAPD (137 aa). At Ser-12 the chain carries Phosphoserine. The chain crosses the membrane as a helical span at residues 139-159; it reads LYIPTMAFITYVLLAGMALGI. Topologically, residues 160 to 174 are lumenal; that stretch reads QQRFSPEVLGLCAST. A helical membrane pass occupies residues 175 to 195; that stretch reads ALVWVFMEVLALLLGLYLATV. At 196 to 203 the chain is on the cytoplasmic side; sequence RSELSTFH. A helical transmembrane segment spans residues 204–226; it reads LLAYSGYKYVGMILSVLTGLLFG. The Lumenal portion of the chain corresponds to 227–229; sequence SDG. The helical transmembrane segment at 230 to 249 threads the bilayer; that stretch reads YYVALAWTSSALMYFIVRSL. Topologically, residues 250 to 271 are cytoplasmic; the sequence is RTAASGPDSMGGPAPRQRLQLY. A helical membrane pass occupies residues 272–292; that stretch reads LTLGAAAFQPLIIYWLTFHLV.

It belongs to the YIF1 family. In terms of assembly, interacts with YIPF5.

It localises to the endoplasmic reticulum membrane. Its subcellular location is the golgi apparatus membrane. The protein resides in the endoplasmic reticulum-Golgi intermediate compartment membrane. Functionally, possible role in transport between endoplasmic reticulum and Golgi. In Mus musculus (Mouse), this protein is Protein YIF1A (Yif1a).